We begin with the raw amino-acid sequence, 325 residues long: E3 ubiquitin-protein ligase SIAH2 (325 aa).

A compositionally biased stretch (polar residues) spans 1 to 15; sequence MSRPSSTGPSANKPC. The interval 1-43 is disordered; it reads MSRPSSTGPSANKPCSKQPPPPQTPHAPSPAAPPAAATISAAG. Residue S6 is modified to Phosphoserine. S16 is subject to Phosphoserine; by DYRK2. Residues 17-33 are compositionally biased toward pro residues; sequence KQPPPPQTPHAPSPAAP. Phosphothreonine; by MAPK14 is present on T24. The residue at position 29 (S29) is a Phosphoserine; by DYRK2 and MAPK14. Over residues 34–43 the composition is skewed to low complexity; it reads PAAATISAAG. S69 bears the Phosphoserine; by DYRK2 mark. Residues 81 to 116 form an RING-type zinc finger; it reads CPVCFDYVLPPILQCQAGHLVCNQCRQKLSCCPTCR. T120 carries the phosphothreonine; by DYRK2 modification. The tract at residues 131 to 323 is SBD; it reads VASAVLFPCK…LGINVTISTC (193 aa). The segment at 134 to 194 adopts an SIAH-type zinc-finger fold; sequence AVLFPCKYAT…VMSHLMHAHK (61 aa). Residues C139, C146, H158, C162, C169, C176, H188, and H193 each contribute to the Zn(2+) site.

It belongs to the SINA (Seven in absentia) family. Homodimer. Interacts with VAV1, without mediating its ubiquitin-mediated degradation. Probable component of some large E3 complex possibly composed of UBE2D1, SIAH2, CACYBP/SIP, SKP1, APC and TBL1X. Interacts with UBE2I. Interacts with UBE2E2. Interacts with PEG10, which may inhibit its activity. Interacts with PEG3 and EGLN2. Interacts with DYRK2. Interacts with SNCAIP. Interacts with NR1D1 and NR1D2. Interacts with DCC. Interacts with AXIN1. Post-translationally, phosphorylated at Thr-24 and Ser-29 by MAPK14, which mediates the degradation by the proteasome of EGLN3. Phosphorylated at Ser-29 by DYRK2; this increases the ubiquitin ligase activity and promotes degradation of EGLN3. As to expression, detected in brain (at protein level).

The protein resides in the cytoplasm. It localises to the nucleus. It catalyses the reaction S-ubiquitinyl-[E2 ubiquitin-conjugating enzyme]-L-cysteine + [acceptor protein]-L-lysine = [E2 ubiquitin-conjugating enzyme]-L-cysteine + N(6)-ubiquitinyl-[acceptor protein]-L-lysine.. The protein operates within protein modification; protein ubiquitination. Its function is as follows. E3 ubiquitin-protein ligase that mediates ubiquitination and subsequent proteasomal degradation of target proteins. E3 ubiquitin ligases accept ubiquitin from an E2 ubiquitin-conjugating enzyme in the form of a thioester and then directly transfers the ubiquitin to targeted substrates. Mediates E3 ubiquitin ligase activity either through direct binding to substrates or by functioning as the essential RING domain subunit of larger E3 complexes. Mediates ubiquitination and proteasomal degradation of DYRK2 in response to hypoxia. Promotes monoubiquitination of SNCA. Triggers the ubiquitin-mediated degradation of many substrates, including proteins involved in transcription regulation (GPS2, POU2AF1, PML, NCOR1), a cell surface receptor (DCC), an antiapoptotic protein (BAG1), and a protein involved in synaptic vesicle function in neurons (SYP). It is thereby involved in apoptosis, tumor suppression, cell cycle, transcription and signaling processes. Has some overlapping function with SIAH1. Triggers the ubiquitin-mediated degradation of TRAF2, whereas SIAH1 does not. Regulates cellular clock function via ubiquitination of circadian transcriptional repressors NR1D1 and NR1D2 leading to their proteasomal degradation. Plays an important role in mediating the rhythmic degradation/clearance of NR1D1 and NR1D2 contributing to their circadian profile of protein abundance. Mediates ubiquitination and degradation of EGLN2 and EGLN3 in response to the unfolded protein response (UPR), leading to their degradation and subsequent stabilization of ATF4. Also part of the Wnt signaling pathway in which it mediates the Wnt-induced ubiquitin-mediated proteasomal degradation of AXIN1. In Rattus norvegicus (Rat), this protein is E3 ubiquitin-protein ligase SIAH2 (Siah2).